A 431-amino-acid polypeptide reads, in one-letter code: MKNTYTSGELEQFFSSDLSSTDGAVQVAIDLEEARQNQQIELIASENIVSKAVMEAQGTVLTNKYAEGYPGRRYYGGCEHVDLVETLAIDRAKLIFKADFVNVQPHSGAQANGAVMLALVKPGDTILGMSLDAGGHLTHGAKPAQSGKWFNAIHYGVRKDDMRIDYDQVLALAIEHQPKMIIAGGSAIPRQIDFAKFREIADQVGAILMVDMAHIAGLVAAGAHQNPLPFADVVTTTTHKTLRGPRGGLILTNNPDVAKKINSAVFPGLQGGPLMHVIAAKAVALGEVLEPSFGAYIKQVLSNARVLASTLQQRGCDIVTDGTDTHLMLVDLRPKGLKGNTTEESLERAGITCNKNGIPFDSEKPMVTSGIRLGTPAGTSRGFGNDEFELIGQWIGDVLDGLVANPEDNSVAEQKVLQQVQQLCLRFPLYS.

(6S)-5,6,7,8-tetrahydrofolate is bound by residues Leu-131 and 135–137; that span reads GHL. An N6-(pyridoxal phosphate)lysine modification is found at Lys-240.

It belongs to the SHMT family. As to quaternary structure, homodimer. It depends on pyridoxal 5'-phosphate as a cofactor.

The protein resides in the cytoplasm. It carries out the reaction (6R)-5,10-methylene-5,6,7,8-tetrahydrofolate + glycine + H2O = (6S)-5,6,7,8-tetrahydrofolate + L-serine. It participates in one-carbon metabolism; tetrahydrofolate interconversion. It functions in the pathway amino-acid biosynthesis; glycine biosynthesis; glycine from L-serine: step 1/1. Catalyzes the reversible interconversion of serine and glycine with tetrahydrofolate (THF) serving as the one-carbon carrier. This reaction serves as the major source of one-carbon groups required for the biosynthesis of purines, thymidylate, methionine, and other important biomolecules. Also exhibits THF-independent aldolase activity toward beta-hydroxyamino acids, producing glycine and aldehydes, via a retro-aldol mechanism. In Colwellia psychrerythraea (strain 34H / ATCC BAA-681) (Vibrio psychroerythus), this protein is Serine hydroxymethyltransferase 3.